The following is an 89-amino-acid chain: Small ribosomal subunit protein uS17 (89 aa).

The protein belongs to the universal ribosomal protein uS17 family. In terms of assembly, part of the 30S ribosomal subunit.

One of the primary rRNA binding proteins, it binds specifically to the 5'-end of 16S ribosomal RNA. The protein is Small ribosomal subunit protein uS17 of Xanthomonas campestris pv. campestris (strain 8004).